The primary structure comprises 182 residues: Mu-like prophage FluMu protein gp45 (182 aa).

Residues 159–182 (TDHQSSGISGKNHDHEERVGKPVP) are disordered. Basic and acidic residues predominate over residues 169–182 (KNHDHEERVGKPVP).

This sequence to phage Mu protein gp45.

The polypeptide is Mu-like prophage FluMu protein gp45 (Haemophilus influenzae (strain ATCC 51907 / DSM 11121 / KW20 / Rd)).